Here is a 296-residue protein sequence, read N- to C-terminus: N-acetylmuramic acid 6-phosphate etherase 2 (296 aa).

An SIS domain is found at 55–218 (IVANFKAGGR…STASMVGIGK (164 aa)). Glu-83 functions as the Proton donor in the catalytic mechanism. The active site involves Glu-114.

Belongs to the GCKR-like family. MurNAc-6-P etherase subfamily. Homodimer.

The catalysed reaction is N-acetyl-D-muramate 6-phosphate + H2O = N-acetyl-D-glucosamine 6-phosphate + (R)-lactate. It functions in the pathway amino-sugar metabolism; N-acetylmuramate degradation. Specifically catalyzes the cleavage of the D-lactyl ether substituent of MurNAc 6-phosphate, producing GlcNAc 6-phosphate and D-lactate. The sequence is that of N-acetylmuramic acid 6-phosphate etherase 2 from Lactiplantibacillus plantarum (strain ATCC BAA-793 / NCIMB 8826 / WCFS1) (Lactobacillus plantarum).